The primary structure comprises 495 residues: UDP-N-acetylmuramate--L-alanine ligase (495 aa).

Gly120 to Thr126 is an ATP binding site.

This sequence belongs to the MurCDEF family.

The protein localises to the cytoplasm. The enzyme catalyses UDP-N-acetyl-alpha-D-muramate + L-alanine + ATP = UDP-N-acetyl-alpha-D-muramoyl-L-alanine + ADP + phosphate + H(+). The protein operates within cell wall biogenesis; peptidoglycan biosynthesis. Functionally, cell wall formation. This is UDP-N-acetylmuramate--L-alanine ligase from Rickettsia prowazekii (strain Madrid E).